Here is a 79-residue protein sequence, read N- to C-terminus: Protein NOI4 (79 aa).

The disordered stretch occupies residues 31-68 (KARDEKKTGGKPGSPGKSSEGHVKSGGGDPSKPQPKKW). A Phosphoserine modification is found at S44.

The protein belongs to the RIN4 family. In terms of processing, proteolytic cleaved by P.syringae pv tomato AvrRpt2 after Gly-12; this cleavage is critical for subsequent proteasome-dependent elimination.

The protein is Protein NOI4 of Arabidopsis thaliana (Mouse-ear cress).